The sequence spans 275 residues: Transmembrane protein 45B (275 aa).

A run of 7 helical transmembrane segments spans residues 7 to 27, 47 to 67, 94 to 114, 116 to 136, 146 to 166, 180 to 200, and 212 to 232; these read HALP…KYPL, IVEA…EQFV, LFFA…HVPL, VDRL…YYHV, IHSL…LEVI, LIIL…PPFG, and LMFI…IVAV. Phosphoserine is present on residues Ser-270 and Ser-272.

The protein belongs to the TMEM45 family. As to quaternary structure, (Microbial infection) Interacts with sindbis virus nsP1 and nsP4; these interactions lead to viral RNA replication inhibition. In terms of assembly, (Microbial infection) Interacts with chikungunya virus nsP1 and nsP4; these interactions lead to viral RNA replication inhibition.

It is found in the endosome membrane. Its subcellular location is the lysosome membrane. The protein resides in the golgi apparatus. It localises to the trans-Golgi network membrane. In terms of biological role, plays a role in innate immunity. Mechanistically, promotes alphaviruses RNA degradation by interacting with the viral polymerase nsP4 and the mRNA-capping enzyme nsP1 and thereby interfering with the interaction between viral RNA and nsP1. This Homo sapiens (Human) protein is Transmembrane protein 45B (TMEM45B).